Consider the following 135-residue polypeptide: MARVTVEDCIDKVENRFELVLLASHRARLVSQGAPITVDRDNDKNPVVALREIADETLSPGDLKEDLIHSLQKHVEVDEPEPDPASLVQTEATPAFAEAAEEEDQPEALTFDRMSEEELLAGIEGLVPPEKSDDY.

This sequence belongs to the RNA polymerase subunit omega family. The RNAP catalytic core consists of 2 alpha, 1 beta, 1 beta' and 1 omega subunit. When a sigma factor is associated with the core the holoenzyme is formed, which can initiate transcription.

The enzyme catalyses RNA(n) + a ribonucleoside 5'-triphosphate = RNA(n+1) + diphosphate. In terms of biological role, promotes RNA polymerase assembly. Latches the N- and C-terminal regions of the beta' subunit thereby facilitating its interaction with the beta and alpha subunits. This chain is DNA-directed RNA polymerase subunit omega, found in Sinorhizobium medicae (strain WSM419) (Ensifer medicae).